The sequence spans 118 residues: UPF0102 protein CMM_1377 (118 aa).

The protein belongs to the UPF0102 family.

The protein is UPF0102 protein CMM_1377 of Clavibacter michiganensis subsp. michiganensis (strain NCPPB 382).